Consider the following 263-residue polypeptide: 3'-5' ssDNA/RNA exonuclease TatD (263 aa).

The a divalent metal cation site is built by Glu91, His127, and His152.

The protein belongs to the metallo-dependent hydrolases superfamily. TatD-type hydrolase family. TatD subfamily. As to quaternary structure, monomer. It depends on Mg(2+) as a cofactor.

The protein resides in the cytoplasm. 3'-5' exonuclease that prefers single-stranded DNA and RNA. May play a role in the H(2)O(2)-induced DNA damage repair. This chain is 3'-5' ssDNA/RNA exonuclease TatD, found in Klebsiella pneumoniae (strain 342).